Reading from the N-terminus, the 243-residue chain is NAD(P)H-quinone oxidoreductase subunit K, chloroplastic (243 aa).

[4Fe-4S] cluster contacts are provided by Cys65, Cys66, Cys130, and Cys161.

This sequence belongs to the complex I 20 kDa subunit family. NDH is composed of at least 16 different subunits, 5 of which are encoded in the nucleus. [4Fe-4S] cluster serves as cofactor.

It localises to the plastid. Its subcellular location is the chloroplast thylakoid membrane. The enzyme catalyses a plastoquinone + NADH + (n+1) H(+)(in) = a plastoquinol + NAD(+) + n H(+)(out). The catalysed reaction is a plastoquinone + NADPH + (n+1) H(+)(in) = a plastoquinol + NADP(+) + n H(+)(out). Functionally, NDH shuttles electrons from NAD(P)H:plastoquinone, via FMN and iron-sulfur (Fe-S) centers, to quinones in the photosynthetic chain and possibly in a chloroplast respiratory chain. The immediate electron acceptor for the enzyme in this species is believed to be plastoquinone. Couples the redox reaction to proton translocation, and thus conserves the redox energy in a proton gradient. The protein is NAD(P)H-quinone oxidoreductase subunit K, chloroplastic of Marchantia polymorpha (Common liverwort).